We begin with the raw amino-acid sequence, 315 residues long: Ectopic P granules protein 4 (315 aa).

6 consecutive transmembrane segments (helical) span residues 84–104, 113–133, 146–166, 190–210, 221–241, and 242–262; these read IGFLVLWQVCILILGLFFSFF, IGYILIIPIFFASRIIQALWF, LPPPPVVPFSSMLAGTLISAL, IVYLHMALLNSMYCFDYFFDG, IFESHWPYFLGFGTPLALACS, and ISSNMFVNSVIFALLFPFFII.

Belongs to the EI24 family. As to expression, expressed in pharyngeal and body wall muscles and intestine cells.

It localises to the cytoplasm. The protein localises to the membrane. In terms of biological role, involved in autophagy. Thought to act in autophagasome and omegasome formation. The sequence is that of Ectopic P granules protein 4 from Caenorhabditis elegans.